Reading from the N-terminus, the 96-residue chain is Co-chaperonin GroES (96 aa).

It belongs to the GroES chaperonin family. As to quaternary structure, heptamer of 7 subunits arranged in a ring. Interacts with the chaperonin GroEL.

It localises to the cytoplasm. In terms of biological role, together with the chaperonin GroEL, plays an essential role in assisting protein folding. The GroEL-GroES system forms a nano-cage that allows encapsulation of the non-native substrate proteins and provides a physical environment optimized to promote and accelerate protein folding. GroES binds to the apical surface of the GroEL ring, thereby capping the opening of the GroEL channel. This Polaromonas sp. (strain JS666 / ATCC BAA-500) protein is Co-chaperonin GroES.